The sequence spans 208 residues: Pyridoxal 5'-phosphate synthase subunit PdxT (208 aa).

Position 46-48 (46-48 (GES)) interacts with L-glutamine. The active-site Nucleophile is the Cys-78. L-glutamine contacts are provided by residues Arg-105 and 156–157 (IR). Residues His-192 and Glu-194 each act as charge relay system in the active site.

The protein belongs to the glutaminase PdxT/SNO family. In the presence of PdxS, forms a dodecamer of heterodimers. Only shows activity in the heterodimer.

It carries out the reaction aldehydo-D-ribose 5-phosphate + D-glyceraldehyde 3-phosphate + L-glutamine = pyridoxal 5'-phosphate + L-glutamate + phosphate + 3 H2O + H(+). The catalysed reaction is L-glutamine + H2O = L-glutamate + NH4(+). Its pathway is cofactor biosynthesis; pyridoxal 5'-phosphate biosynthesis. In terms of biological role, catalyzes the hydrolysis of glutamine to glutamate and ammonia as part of the biosynthesis of pyridoxal 5'-phosphate. The resulting ammonia molecule is channeled to the active site of PdxS. The chain is Pyridoxal 5'-phosphate synthase subunit PdxT from Bifidobacterium adolescentis (strain ATCC 15703 / DSM 20083 / NCTC 11814 / E194a).